The following is an 827-amino-acid chain: Lon protease (827 aa).

The disordered stretch occupies residues 1 to 27 (MNDETLREQTTAESEETSPTTPSPEPE). Positions 32-225 (LPLIPLEGAV…KVLMFYRKQF (194 aa)) constitute a Lon N-terminal domain. 385–392 (GPPGVGKT) provides a ligand contact to ATP. Positions 625–806 (IDQPGVAIGL…DEVLSIALLP (182 aa)) constitute a Lon proteolytic domain. Catalysis depends on residues Ser712 and Lys755.

It belongs to the peptidase S16 family. As to quaternary structure, homohexamer. Organized in a ring with a central cavity.

It localises to the cytoplasm. The enzyme catalyses Hydrolysis of proteins in presence of ATP.. Functionally, ATP-dependent serine protease that mediates the selective degradation of mutant and abnormal proteins as well as certain short-lived regulatory proteins. Required for cellular homeostasis and for survival from DNA damage and developmental changes induced by stress. Degrades polypeptides processively to yield small peptide fragments that are 5 to 10 amino acids long. Binds to DNA in a double-stranded, site-specific manner. This chain is Lon protease, found in Chloroflexus aurantiacus (strain ATCC 29366 / DSM 635 / J-10-fl).